Consider the following 416-residue polypeptide: Multifunctional CCA protein (416 aa).

Residues Gly8 and Arg11 each coordinate ATP. Residues Gly8 and Arg11 each contribute to the CTP site. The Mg(2+) site is built by Asp21 and Asp23. ATP contacts are provided by Arg91, Arg138, and Arg141. Residues Arg91, Arg138, and Arg141 each coordinate CTP. An HD domain is found at 229–331; that stretch reads TGLHQELVSD…YELLQRCDAF (103 aa).

It belongs to the tRNA nucleotidyltransferase/poly(A) polymerase family. Bacterial CCA-adding enzyme type 1 subfamily. As to quaternary structure, monomer. Can also form homodimers and oligomers. Requires Mg(2+) as cofactor. Ni(2+) is required as a cofactor.

The catalysed reaction is a tRNA precursor + 2 CTP + ATP = a tRNA with a 3' CCA end + 3 diphosphate. It catalyses the reaction a tRNA with a 3' CCA end + 2 CTP + ATP = a tRNA with a 3' CCACCA end + 3 diphosphate. In terms of biological role, catalyzes the addition and repair of the essential 3'-terminal CCA sequence in tRNAs without using a nucleic acid template. Adds these three nucleotides in the order of C, C, and A to the tRNA nucleotide-73, using CTP and ATP as substrates and producing inorganic pyrophosphate. tRNA 3'-terminal CCA addition is required both for tRNA processing and repair. Also involved in tRNA surveillance by mediating tandem CCA addition to generate a CCACCA at the 3' terminus of unstable tRNAs. While stable tRNAs receive only 3'-terminal CCA, unstable tRNAs are marked with CCACCA and rapidly degraded. This Xylella fastidiosa (strain 9a5c) protein is Multifunctional CCA protein.